The following is a 15639-amino-acid chain: FR901469 synthetase (15639 aa).

The 77-residue stretch at 5-81 folds into the Carrier 1 domain; the sequence is HTSDGLRKLL…DLVDKIIEQQ (77 aa). The residue at position 42 (serine 42) is an O-(pantetheine 4'-phosphoryl)serine. Over residues 82–94 the composition is skewed to acidic residues; sequence LEEEEEDDDSLDN. The segment at 82 to 105 is disordered; the sequence is LEEEEEDDDSLDNESERDHSQKDL. Residues 140–553 are condensation 1; the sequence is PCLSMQEGCL…RDFLPLTEDD (414 aa). An adenylation 1 region spans residues 579–971; sequence TISKQPDAVA…LGRRDTQVKI (393 aa). One can recognise a Carrier 2 domain in the interval 1108–1184; it reads TPATAIEKEL…ELALVARSTT (77 aa). Serine 1145 bears the O-(pantetheine 4'-phosphoryl)serine mark. The tract at residues 1219-1626 is epimerase 1; it reads RSSNRFNQSV…TITHLVKRLA (408 aa). The tract at residues 1667 to 2097 is condensation 2; sequence EDVLPCTPIQ…LGNLSLLTNN (431 aa). The tract at residues 2122-2518 is adenylation 2; that stretch reads QEAAKEYTNA…GRRDNQIKIR (397 aa). The Carrier 3 domain maps to 2654–2730; that stretch reads VPATALEKQL…ELALKAKSTT (77 aa). An O-(pantetheine 4'-phosphoryl)serine modification is found at serine 2691. The epimerase 2 stretch occupies residues 2761-3176; it reads VSAGEHRYNQ…TELLHRLEQM (416 aa). Residues 3215–3640 are condensation 3; that stretch reads QDIYPCSPTQ…DDLIMMSPED (426 aa). Residues 3669 to 4059 are adenylation 3; that stretch reads TQPHAPAVAA…MGRIDSQIKI (391 aa). In terms of domain architecture, Carrier 4 spans 4193-4269; the sequence is PPSNDAERMV…QLAAIVTQRG (77 aa). An O-(pantetheine 4'-phosphoryl)serine modification is found at serine 4230. Residues 4316 to 4714 are condensation 4; that stretch reads EDVYPCTPLQ…ILAHGTGLEE (399 aa). Residues 4756-5149 form an adenylation 4 region; that stretch reads TEAASTRPDA…GRLDTQAKLR (394 aa). Residues 5284–5360 form the Carrier 5 domain; it reads EPATIMERQL…DLASHIDHHT (77 aa). Serine 5321 is subject to O-(pantetheine 4'-phosphoryl)serine. The condensation 5 stretch occupies residues 5402–5802; the sequence is EDIYPCTPLQ…TVFAQLCDSS (401 aa). Residues 5847–6238 are adenylation 5; sequence KYPNEPAVHA…LGRRDSQMKV (392 aa). Positions 6375-6451 constitute a Carrier 6 domain; it reads QPSTTAEIKL…DMAKIVEEHV (77 aa). Serine 6412 carries the O-(pantetheine 4'-phosphoryl)serine modification. A condensation 6 region spans residues 6494 to 6889; sequence EDVYPATPLQ…RFAKVYQQLS (396 aa). The adenylation 6 stretch occupies residues 6952-7335; it reads WDGSMTYAEL…GRRDTQIKIR (384 aa). The 74-residue stretch at 7473 to 7546 folds into the Carrier 7 domain; the sequence is TAMEEQLRTV…QLALLASTDE (74 aa). The residue at position 7507 (serine 7507) is an O-(pantetheine 4'-phosphoryl)serine. Residues 7580 to 7992 form an epimerase 3 region; the sequence is MGENRYNQSV…SKTLEELTTQ (413 aa). Positions 8034–8459 are condensation 7; that stretch reads EDVFPASPMQ…QRMRNISLAS (426 aa). The segment at 8486–8882 is adenylation 7; sequence QKSVHARPDA…GRRDTQVKIR (397 aa). The 77-residue stretch at 9015–9091 folds into the Carrier 8 domain; that stretch reads QPATDAERQL…DLAKTIQDSE (77 aa). Position 9052 is an O-(pantetheine 4'-phosphoryl)serine (serine 9052). Residues 9136–9535 are condensation 8; that stretch reads EDVYPCTPLQ…FAAIFRQLCD (400 aa). An adenylation 8 region spans residues 9583-9974; the sequence is KNPHAIAVNA…GRRDNQMKIR (392 aa). A Carrier 9 domain is found at 10110–10186; sequence EPATPMEMQL…GLAALIQKQI (77 aa). Serine 10147 is modified (O-(pantetheine 4'-phosphoryl)serine). The tract at residues 10186–10208 is disordered; that stretch reads IDEEEEYDDSEEEEEDDEEEVRE. The span at 10187 to 10206 shows a compositional bias: acidic residues; that stretch reads DEEEEYDDSEEEEEDDEEEV. The condensation 9 stretch occupies residues 10240 to 10662; that stretch reads VEDVYPCTPL…VLSETDKTKI (423 aa). Residues 10683-11082 are adenylation 9; sequence KQAIERPNAP…GRRDTQIKIR (400 aa). The Carrier 10 domain maps to 11217 to 11293; the sequence is EPATGMERHL…DLARETESQG (77 aa). Serine 11254 is modified (O-(pantetheine 4'-phosphoryl)serine). Positions 11329-11725 are condensation 10; sequence EDVYPCTPLQ…ETIFQQLSSV (397 aa). The tract at residues 11770–12165 is adenylation 10; sequence FKRTADKQPE…GRRDTQIKVR (396 aa). The Carrier 11 domain occupies 12298 to 12374; it reads EPSTEMERRI…DLAAAVQGRI (77 aa). Serine 12335 bears the O-(pantetheine 4'-phosphoryl)serine mark. A condensation 11 region spans residues 12418–12830; it reads EDVYPATPLQ…IQDIEMVSEQ (413 aa). Positions 12861–13249 are adenylation 11; the sequence is SRADEIAICA…GRRDTQIKIR (389 aa). The 77-residue stretch at 13383–13459 folds into the Carrier 12 domain; the sequence is MPGTVQEEQL…QLGQKVKEAV (77 aa). At serine 13420 the chain carries O-(pantetheine 4'-phosphoryl)serine. The interval 13476–13901 is epimerase 4; sequence APIQQMFFEQ…LKDMTSTLLQ (426 aa). The tract at residues 13940-14369 is condensation 12; that stretch reads EDILPCSPIQ…SIVGEHDLQQ (430 aa). Residues 14390 to 14789 are adenylation 12; that stretch reads RDAAHRTPDA…GRGDGQIKIR (400 aa). In terms of domain architecture, Carrier 13 spans 14916–14992; sequence LPASADEGAL…DMASVASAAR (77 aa). Serine 14953 is subject to O-(pantetheine 4'-phosphoryl)serine. Positions 15062–15433 are condensation 13; the sequence is QHAVDLAALK…DIMVRLASQQ (372 aa). Disordered regions lie at residues 15434–15511 and 15617–15639; these read EGTV…ENRQ and VQTN…KGHI. Residues 15455 to 15472 show a composition bias toward low complexity; the sequence is NGTNGSNGDGTDAANGIG. Over residues 15482–15494 the composition is skewed to basic and acidic residues; that stretch reads AVEKSSGDAEVEK. Residues 15495-15511 are compositionally biased toward polar residues; the sequence is VSTNGHADNNTSAENRQ.

The protein belongs to the NRP synthetase family.

Its pathway is antifungal biosynthesis. Its function is as follows. Nonribosomal peptide synthetase; part of the gene cluster that mediates the biosynthesis of the antifungal antibiotic FR901469, an inhibitor of beta-1,3-glucansynthase, exerting antifungal activity against the pathogenes Candida albicans and Aspergillus fumigatus. FR901469 is a cyclic depsipeptide containing 12 amino acid residues and a fatty acid chain. The NRPS frbI contains 12 modules responsible for the formation of the depsipeptide backbone which is denoted as Acyl-Thr-Ala-Tyr-Val-4OHPro-Thr-Thr-3OHPro-threo3OHGln-Gly-Thr-Orn-OH (C71H116N14O23). The PKS frbB is probably involved in the production of the hydrocarbon chain, and the acyl-CoA ligase frbC might be involved in the transport of the chain to the peptide ptoduct of frbI. Because FR901469 contains 3 hydroxylated amino acid residues, the 3 oxygenases frbA, frbH, and frbJ might be participating in amino acid hydroxylation. As no thioesterase domains were detected in frbI or frbB, the thioesterases frbD and frbE may instead release and cyclize the products of the NRPS and PKS, respectively. The sequence is that of FR901469 synthetase from Dothideomycetidae sp. (strain 11243) (Fungal sp. (strain No.11243)).